The following is a 460-amino-acid chain: Glycogen synthase (460 aa).

Position 15 (Lys15) interacts with ADP-alpha-D-glucose.

This sequence belongs to the glycosyltransferase 1 family. Bacterial/plant glycogen synthase subfamily.

The catalysed reaction is [(1-&gt;4)-alpha-D-glucosyl](n) + ADP-alpha-D-glucose = [(1-&gt;4)-alpha-D-glucosyl](n+1) + ADP + H(+). It participates in glycan biosynthesis; glycogen biosynthesis. Functionally, synthesizes alpha-1,4-glucan chains using ADP-glucose. The sequence is that of Glycogen synthase from Trichodesmium erythraeum (strain IMS101).